A 223-amino-acid chain; its full sequence is DNA mismatch repair protein MutH (223 aa).

The protein belongs to the MutH family.

It is found in the cytoplasm. Sequence-specific endonuclease that cleaves unmethylated GATC sequences. It is involved in DNA mismatch repair. The protein is DNA mismatch repair protein MutH of Shewanella oneidensis (strain ATCC 700550 / JCM 31522 / CIP 106686 / LMG 19005 / NCIMB 14063 / MR-1).